A 41-amino-acid chain; its full sequence is MKVANSLRSLKLRHRDCQVVRRKGRVYVINKTQKRYKARQG.

This sequence belongs to the bacterial ribosomal protein bL36 family.

The protein is Large ribosomal subunit protein bL36 of Cereibacter sphaeroides (strain ATCC 17029 / ATH 2.4.9) (Rhodobacter sphaeroides).